The primary structure comprises 372 residues: GPN-loop GTPase 1 (372 aa).

Residue Ala2 is modified to N-acetylalanine. 29 to 34 (GSGKTT) serves as a coordination point for GTP. The short motif at 86–88 (GPN) is the Gly-Pro-Asn (GPN)-loop; involved in dimer interface element. A GTP-binding site is contributed by 189–192 (NKTD). Phosphoserine occurs at positions 301 and 314. The interval 303–372 (ALDPEAGKGN…ESMAHWKRNK (70 aa)) is disordered. Position 328 is a phosphothreonine (Thr328). Residues 330-342 (DEEDEEADSDTDD) show a composition bias toward acidic residues. Phosphoserine is present on Ser338. At Thr340 the chain carries Phosphothreonine. Positions 343 to 355 (IDHRVTEESREEP) are enriched in basic and acidic residues.

This sequence belongs to the GPN-loop GTPase family. Heterodimer with GPN3. Binds to RNA polymerase II (RNAPII). Interacts directly with RNAPII subunits RPB4 and RPB7 and the CTD of RPB1. Interacts with XPA.

The protein resides in the cytoplasm. It localises to the nucleus. Functionally, small GTPase required for proper nuclear import of RNA polymerase II (RNAPII). May act at an RNAP assembly step prior to nuclear import. Forms an interface between the RNA polymerase II enzyme and chaperone/scaffolding proteins, suggesting that it is required to connect RNA polymerase II to regulators of protein complex formation. May be involved in nuclear localization of XPA. The chain is GPN-loop GTPase 1 from Mus musculus (Mouse).